Consider the following 619-residue polypeptide: ESX-2 secretion system protein EccA2 (619 aa).

Glycine 373–threonine 380 lines the ATP pocket.

It belongs to the CbxX/CfxQ family. In terms of assembly, part of the ESX-2 / type VII secretion system (T7SS), which is composed of cytosolic and membrane components.

It localises to the cytoplasm. Its function is as follows. Part of an ESX-2 / type VII specialized secretion system (T7SS), which exports several proteins. May have ATPase activity and might provide energy for the export of ESX-2 substrates. This chain is ESX-2 secretion system protein EccA2, found in Mycobacterium bovis (strain ATCC BAA-935 / AF2122/97).